Reading from the N-terminus, the 196-residue chain is Superoxide dismutase [Fe] (196 aa).

Fe cation contacts are provided by histidine 20, histidine 68, aspartate 157, and histidine 161.

Belongs to the iron/manganese superoxide dismutase family. As to quaternary structure, homotetramer. It depends on Fe cation as a cofactor.

The enzyme catalyses 2 superoxide + 2 H(+) = H2O2 + O2. In terms of biological role, destroys superoxide anion radicals which are normally produced within the cells and which are toxic to biological systems. The polypeptide is Superoxide dismutase [Fe] (Tetrahymena pyriformis).